A 750-amino-acid chain; its full sequence is Glutamate carboxypeptidase 2 (750 aa).

Residues 1–19 (MWNLLHETDSAVATARRPR) are Cytoplasmic-facing. Ser10 bears the Phosphoserine mark. The chain crosses the membrane as a helical; Signal-anchor for type II membrane protein span at residues 20-43 (WLCAGALVLAGGFFLLGFLFGWFI). Residues 44 to 750 (KSSNEATNIT…AAAETLSEVA (707 aa)) lie on the Extracellular side of the membrane. N-linked (GlcNAc...) asparagine glycans are attached at residues Asn51, Asn76, Asn121, Asn140, Asn153, and Asn195. Substrate is bound by residues Arg210 and Asn257. Positions 269 and 272 each coordinate Ca(2+). Positions 274–587 (ANEYAYRRGI…QVRGGMVFEL (314 aa)) are NAALADase. Residue Asn336 is glycosylated (N-linked (GlcNAc...) asparagine). Residues His377 and Asp387 each coordinate Zn(2+). Glu424 contributes to the substrate binding site. The active-site Nucleophile; for NAALADase activity is Glu424. Zn(2+) is bound at residue Glu425. Ca(2+)-binding residues include Glu433 and Glu436. Asp453 provides a ligand contact to Zn(2+). N-linked (GlcNAc...) asparagine glycosylation is found at Asn459 and Asn476. Substrate is bound by residues 517-518 (SG), Asn519, 534-536 (RAR), Tyr552, and 552-553 (YH). Position 553 (His553) interacts with Zn(2+). The active-site Charge relay system is Ser628. N-linked (GlcNAc...) asparagine glycosylation occurs at Asn638. Catalysis depends on charge relay system residues Asp666 and His689. Position 699–700 (699–700 (KY)) interacts with substrate.

This sequence belongs to the peptidase M28 family. M28B subfamily. As to quaternary structure, homodimer. Zn(2+) is required as a cofactor. In terms of processing, the first two amino acids at the N-terminus of isoform PSMA' appear to be cleaved by limited proteolysis. The N-terminus is blocked. In terms of tissue distribution, highly expressed in prostate epithelium. Detected in urinary bladder, kidney, testis, ovary, fallopian tube, breast, adrenal gland, liver, esophagus, stomach, small intestine, colon and brain (at protein level). Detected in the small intestine, brain, kidney, liver, spleen, colon, trachea, spinal cord and the capillary endothelium of a variety of tumors. Expressed specifically in jejunum brush border membranes. In the brain, highly expressed in the ventral striatum and brain stem. Also expressed in fetal liver and kidney. Isoform PSMA' is the most abundant form in normal prostate. Isoform PSMA-1 is the most abundant form in primary prostate tumors. Isoform PSMA-9 is specifically expressed in prostate cancer.

Its subcellular location is the cell membrane. The protein localises to the cytoplasm. The catalysed reaction is Release of an unsubstituted, C-terminal glutamyl residue, typically from Ac-Asp-Glu or folylpoly-gamma-glutamates.. With respect to regulation, the NAALADase activity is inhibited by beta-NAAG, quisqualic acid, 2-(phosphonomethyl) pentanedioic acid (PMPA) and EDTA. Activated by cobalt. In terms of biological role, has both folate hydrolase and N-acetylated-alpha-linked-acidic dipeptidase (NAALADase) activity. Has a preference for tri-alpha-glutamate peptides. In the intestine, required for the uptake of folate. In the brain, modulates excitatory neurotransmission through the hydrolysis of the neuropeptide, N-aceylaspartylglutamate (NAAG), thereby releasing glutamate. Involved in prostate tumor progression. Its function is as follows. Also exhibits a dipeptidyl-peptidase IV type activity. In vitro, cleaves Gly-Pro-AMC. In Homo sapiens (Human), this protein is Glutamate carboxypeptidase 2.